The primary structure comprises 140 residues: Putative 6-pyruvoyl tetrahydrobiopterin synthase (140 aa).

H19 contributes to the Zn(2+) binding site. The Proton acceptor role is filled by C38. The Zn(2+) site is built by H44 and H46. Residues H84 and E129 each act as charge relay system in the active site.

It belongs to the PTPS family. As to quaternary structure, homohexamer formed of two homotrimers in a head to head fashion. It depends on Zn(2+) as a cofactor.

The catalysed reaction is 7,8-dihydroneopterin 3'-triphosphate = 6-pyruvoyl-5,6,7,8-tetrahydropterin + triphosphate + H(+). It participates in cofactor biosynthesis; tetrahydrobiopterin biosynthesis; tetrahydrobiopterin from 7,8-dihydroneopterin triphosphate: step 1/3. Involved in the biosynthesis of tetrahydrobiopterin, an essential cofactor of aromatic amino acid hydroxylases. Catalyzes the transformation of 7,8-dihydroneopterin triphosphate into 6-pyruvoyl tetrahydropterin. The polypeptide is Putative 6-pyruvoyl tetrahydrobiopterin synthase (ptps-1) (Caenorhabditis elegans).